Consider the following 121-residue polypeptide: Auxin-responsive protein SAUR32 (121 aa).

Belongs to the ARG7 family. As to expression, expressed in roots, leaves and stems.

It localises to the nucleus. The protein resides in the cytoplasm. Its function is as follows. May play a role in the apical hook development. This is Auxin-responsive protein SAUR32 from Arabidopsis thaliana (Mouse-ear cress).